A 350-amino-acid polypeptide reads, in one-letter code: Flap endonuclease 1 (350 aa).

The tract at residues 1 to 102 (MGVNLKDLIP…KEIEKRRKIR (102 aa)) is N-domain. Mg(2+) contacts are provided by aspartate 31, aspartate 84, glutamate 156, glutamate 158, aspartate 177, aspartate 179, and aspartate 240. The interval 120-262 (AARRYAMMSA…KALQLVKAYK (143 aa)) is I-domain. The interaction with PCNA stretch occupies residues 341 to 349 (KQLGLEAWF).

It belongs to the XPG/RAD2 endonuclease family. FEN1 subfamily. As to quaternary structure, interacts with PCNA. PCNA stimulates the nuclease activity without altering cleavage specificity. It depends on Mg(2+) as a cofactor.

In terms of biological role, structure-specific nuclease with 5'-flap endonuclease and 5'-3' exonuclease activities involved in DNA replication and repair. During DNA replication, cleaves the 5'-overhanging flap structure that is generated by displacement synthesis when DNA polymerase encounters the 5'-end of a downstream Okazaki fragment. Binds the unpaired 3'-DNA end and kinks the DNA to facilitate 5' cleavage specificity. Cleaves one nucleotide into the double-stranded DNA from the junction in flap DNA, leaving a nick for ligation. Also involved in the base excision repair (BER) pathway. Acts as a genome stabilization factor that prevents flaps from equilibrating into structures that lead to duplications and deletions. Also possesses 5'-3' exonuclease activity on nicked or gapped double-stranded DNA. This chain is Flap endonuclease 1, found in Staphylothermus marinus (strain ATCC 43588 / DSM 3639 / JCM 9404 / F1).